Reading from the N-terminus, the 517-residue chain is GTPase Obg (517 aa).

In terms of domain architecture, Obg spans 2–159; the sequence is ATFVDTVTLH…GDVVLELKVV (158 aa). The region spanning 160–336 is the OBG-type G domain; that stretch reads ADVALVGYPS…LSFALAELVK (177 aa). GTP is bound by residues 166–173, 191–195, 212–215, 288–291, and 317–319; these read GYPSAGKS, FTTLH, DVPG, NKID, and STV. Mg(2+) is bound by residues Ser173 and Thr193. The 85-residue stretch at 355-439 folds into the OCT domain; it reads PRAVDEKPFT…GDGVVFDWEP (85 aa). The segment at 490–517 is disordered; sequence EGEAGLWADEDGTGQDGTDEDATTDAKA. A compositionally biased stretch (acidic residues) spans 497-517; it reads ADEDGTGQDGTDEDATTDAKA.

The protein belongs to the TRAFAC class OBG-HflX-like GTPase superfamily. OBG GTPase family. Monomer. The cofactor is Mg(2+).

The protein resides in the cytoplasm. In terms of biological role, an essential GTPase which binds GTP, GDP and possibly (p)ppGpp with moderate affinity, with high nucleotide exchange rates and a fairly low GTP hydrolysis rate. Plays a role in control of the cell cycle, stress response, ribosome biogenesis and in those bacteria that undergo differentiation, in morphogenesis control. The sequence is that of GTPase Obg from Clavibacter sepedonicus (Clavibacter michiganensis subsp. sepedonicus).